The sequence spans 290 residues: 4-hydroxy-tetrahydrodipicolinate synthase (290 aa).

Thr-48 is a pyruvate binding site. The active-site Proton donor/acceptor is Tyr-137. Residue Lys-165 is the Schiff-base intermediate with substrate of the active site. Ile-206 contacts pyruvate.

The protein belongs to the DapA family. As to quaternary structure, homotetramer; dimer of dimers.

It is found in the cytoplasm. The catalysed reaction is L-aspartate 4-semialdehyde + pyruvate = (2S,4S)-4-hydroxy-2,3,4,5-tetrahydrodipicolinate + H2O + H(+). It participates in amino-acid biosynthesis; L-lysine biosynthesis via DAP pathway; (S)-tetrahydrodipicolinate from L-aspartate: step 3/4. Its function is as follows. Catalyzes the condensation of (S)-aspartate-beta-semialdehyde [(S)-ASA] and pyruvate to 4-hydroxy-tetrahydrodipicolinate (HTPA). This chain is 4-hydroxy-tetrahydrodipicolinate synthase, found in Ligilactobacillus salivarius (strain UCC118) (Lactobacillus salivarius).